The following is a 169-amino-acid chain: Neurotensin/neuromedin N (169 aa).

Positions 1–22 (MRGMNLQLVCLTLLAFSSWSLC) are cleaved as a signal peptide.

It belongs to the neurotensin family. Interacts with NTSR1. Interacts with SORT1. Interacts with SORL1. Post-translationally, neurotensin is cleaved and degraded by Angiotensin-converting enzyme (ACE) and neprilysin (MME).

Its subcellular location is the secreted. The protein localises to the cytoplasmic vesicle. The protein resides in the secretory vesicle. Functionally, neurotensin may play an endocrine or paracrine role in the regulation of fat metabolism. It causes contraction of smooth muscle. The chain is Neurotensin/neuromedin N (Nts) from Mus musculus (Mouse).